Consider the following 1171-residue polypeptide: Phytochrome B (1171 aa).

A compositionally biased stretch (low complexity) spans Met1–Ala19. The segment at Met1–Ala53 is disordered. Residues Ala38–Ala52 are compositionally biased toward gly residues. Residues Asp259 to Leu442 enclose the GAF domain. Residue Cys364 participates in phytochromobilin binding. PAS domains follow at residues Val661–Asp732 and Asp795–Leu866. Residues Tyr943–Gln1161 form the Histidine kinase domain.

The protein belongs to the phytochrome family. As to quaternary structure, homodimer. Post-translationally, contains one covalently linked phytochromobilin chromophore.

Regulatory photoreceptor which exists in two forms that are reversibly interconvertible by light: the Pr form that absorbs maximally in the red region of the spectrum and the Pfr form that absorbs maximally in the far-red region. Photoconversion of Pr to Pfr induces an array of morphogenic responses, whereas reconversion of Pfr to Pr cancels the induction of those responses. Pfr controls the expression of a number of nuclear genes including those encoding the small subunit of ribulose-bisphosphate carboxylase, chlorophyll A/B binding protein, protochlorophyllide reductase, rRNA, etc. It also controls the expression of its own gene(s) in a negative feedback fashion. The protein is Phytochrome B (PHYB) of Oryza sativa subsp. indica (Rice).